The primary structure comprises 208 residues: Fibroblast growth factor-binding protein 2 (208 aa).

Positions 1–19 (MKRVALLFLVVICGMGGLG) are cleaved as a signal peptide. Disulfide bonds link C43–C59, C68–C102, and C77–C113. Residues 130-181 (EPEDGANRDKSSQKTSASVRGAGKSSVKKTGKPAVLPRIKPTQHGQGSENET) are disordered. C191 and C199 are disulfide-bonded.

It belongs to the fibroblast growth factor-binding protein family.

It localises to the secreted. The protein resides in the extracellular space. The chain is Fibroblast growth factor-binding protein 2 (FGFBP2) from Gallus gallus (Chicken).